A 564-amino-acid polypeptide reads, in one-letter code: Protein CPR-5 (564 aa).

Positions 1 to 87 are disordered; sequence MEALLLPPSP…TSNSNSTKRV (87 aa). Residues 12-28 show a composition bias toward polar residues; that stretch reads PQNQITNPANSKPNHQS. The span at 29–38 shows a compositional bias: basic and acidic residues; sequence GDVHKDETMM. The span at 69–84 shows a compositional bias: low complexity; that stretch reads SSSYCSTSSTSNSNST. 5 consecutive transmembrane segments (helical) span residues 347 to 367, 411 to 431, 443 to 463, 472 to 492, and 526 to 546; these read IMDW…LGVY, VRVW…TYFL, PISF…KLCV, LWLI…VFTL, and VYVV…FATF.

Interacts with SIM and SMR1. Ubiquitous.

It localises to the membrane. It is found in the nucleus membrane. May play a role in transcriptional processes. Negatively regulates the senescence and chlorotic lesions induced by biotic (e.g. pathogens) and abiotic (e.g. sugars, darkness) agents, probably by controlling programmed cell death (pcd). Negative regulator of plant programmed cell death (PCD) and effector-triggered immunity (ETI). Promotes cell division and endoreduplication (e.g. in trichomes). The protein is Protein CPR-5 of Arabidopsis thaliana (Mouse-ear cress).